We begin with the raw amino-acid sequence, 61 residues long: Small ribosomal subunit protein uS14 (61 aa).

The Zn(2+) site is built by cysteine 24, cysteine 27, cysteine 40, and cysteine 43.

This sequence belongs to the universal ribosomal protein uS14 family. Zinc-binding uS14 subfamily. As to quaternary structure, part of the 30S ribosomal subunit. Contacts proteins S3 and S10. It depends on Zn(2+) as a cofactor.

Functionally, binds 16S rRNA, required for the assembly of 30S particles and may also be responsible for determining the conformation of the 16S rRNA at the A site. The sequence is that of Small ribosomal subunit protein uS14 from Geobacillus thermodenitrificans (strain NG80-2).